The primary structure comprises 228 residues: MADDFGFFSSSESGAPEAAEEDPAAAFLAQQESEIAGIENDEGFGAPAGSQGGLAQPGPASGASEDMGATVNGDVFQEANGPADGYAAIAQADRLTQEPESIRKWREEQRKRLQELDAASKVMEQEWREKAKKDLEEWNQRQSEQVEKNKINNRIADKAFYQQPDADIIGYVASEEAFVKESKEETPGTEWEKVAQLCDFNPKSSKQCKDVSRLRSVLMSLKQTPLSR.

Met1 carries the post-translational modification Blocked amino end (Met). Residues 1 to 17 (MADDFGFFSSSESGAPE) show a composition bias toward low complexity. The segment at 1–80 (MADDFGFFSS…VNGDVFQEAN (80 aa)) is disordered. Residues Ser11 and Ser13 each carry the phosphoserine modification. Residues 92–154 (ADRLTQEPES…QVEKNKINNR (63 aa)) are involved in binding clathrin heavy chain. Phosphothreonine is present on Thr186. Residues Cys198 and Cys208 are joined by a disulfide bond. Position 203 is an N6-acetyllysine (Lys203). The residue at position 216 (Ser216) is a Phosphoserine.

Belongs to the clathrin light chain family. Clathrin coats are formed from molecules containing 3 heavy chains and 3 light chains. Interacts (via N-terminus) with HIP1. Interacts with HIP1R.

The protein resides in the cytoplasmic vesicle membrane. It is found in the membrane. Its subcellular location is the coated pit. Its function is as follows. Clathrin is the major protein of the polyhedral coat of coated pits and vesicles. The protein is Clathrin light chain B (CLTB) of Bos taurus (Bovine).